Here is a 290-residue protein sequence, read N- to C-terminus: Type II secretion system protein C (290 aa).

Over 1 to 28 (MTLPFRDDLLSSLLARCKTVPLSRFSQP) the chain is Cytoplasmic. Residues 29 to 46 (LFWLLLLLLAHQCAGLTW) form a helical membrane-spanning segment. The Periplasmic portion of the chain corresponds to 47–290 (RLLDLGSQQS…LYDVYVGLSE (244 aa)).

The protein belongs to the GSP C family.

Its subcellular location is the cell inner membrane. Involved in a type II secretion system (T2SS, formerly general secretion pathway, GSP) for the export of proteins. The sequence is that of Type II secretion system protein C (exeC) from Aeromonas salmonicida.